Consider the following 365-residue polypeptide: tRNA-specific 2-thiouridylase MnmA (365 aa).

Residues 14–21 (AMSGGVDS) and L40 each bind ATP. C108 (nucleophile) is an active-site residue. C108 and C204 are disulfide-bonded. G132 is an ATP binding site. Residues 154–156 (KDQ) form an interaction with tRNA region. Catalysis depends on C204, which acts as the Cysteine persulfide intermediate.

The protein belongs to the MnmA/TRMU family.

Its subcellular location is the cytoplasm. It carries out the reaction S-sulfanyl-L-cysteinyl-[protein] + uridine(34) in tRNA + AH2 + ATP = 2-thiouridine(34) in tRNA + L-cysteinyl-[protein] + A + AMP + diphosphate + H(+). Its function is as follows. Catalyzes the 2-thiolation of uridine at the wobble position (U34) of tRNA, leading to the formation of s(2)U34. This chain is tRNA-specific 2-thiouridylase MnmA, found in Rickettsia akari (strain Hartford).